The following is a 285-amino-acid chain: Complement C1q tumor necrosis factor-related protein 2 (285 aa).

The N-terminal stretch at 1-15 (MIPWVLLACALPCAA) is a signal peptide. The segment at 33 to 144 (QLVCSLPGPQ…PGLPGPCSCG (112 aa)) is disordered. Residues 40–141 (GPQGPPGPPG…KGEPGLPGPC (102 aa)) enclose the Collagen-like domain. The span at 41-51 (PQGPPGPPGAP) shows a compositional bias: pro residues. The span at 53 to 65 (PSGMMGRMGFPGK) shows a compositional bias: low complexity. The segment covering 66-78 (DGQDGHDGDRGDS) has biased composition (basic and acidic residues). The segment covering 84 to 120 (PGRTGNRGKPGPKGKAGAIGRAGPRGPKGVNGTPGKH) has biased composition (low complexity). One can recognise a C1q domain in the interval 145-281 (SGHTKSAFSV…GFLIYADQDD (137 aa)).

In terms of assembly, may interact with ERFE. In terms of tissue distribution, expressed in adipose tissue.

Its subcellular location is the secreted. Functionally, involved in the regulation of lipid metabolism in adipose tissue and liver. This chain is Complement C1q tumor necrosis factor-related protein 2 (C1QTNF2), found in Homo sapiens (Human).